The following is a 456-amino-acid chain: Putative F-box/FBD/LRR-repeat protein At1g66300 (456 aa).

A disordered region spans residues 1 to 23; the sequence is MDEDGEKRVRTKRLCSPESSDKK. The 47-residue stretch at 28–74 folds into the F-box domain; sequence VDWVRDLPESLICHVLLNLSTKDVIKNCVLSTKWRYLWRYVPGLDLD. LRR repeat units follow at residues 136–163, 185–210, 234–260, and 347–372; these read HLDL…KLCG, VKFA…TLCR, PNTM…TLSH, and FYED…VVGS. Residues 377 to 429 form the FBD domain; the sequence is MERTSIISGHRCLLSSLEYVEIETPLTGEVFEMKLVSYLLENSPILKKLTIHL.

The chain is Putative F-box/FBD/LRR-repeat protein At1g66300 from Arabidopsis thaliana (Mouse-ear cress).